A 145-amino-acid chain; its full sequence is Probable thioredoxin-2 (145 aa).

One can recognise a Thioredoxin domain in the interval 39 to 144; the sequence is VFDIDSVEDF…LDDFIEDVLA (106 aa). Active-site nucleophile residues include Cys-68 and Cys-71. Cys-68 and Cys-71 are oxidised to a cystine.

It belongs to the thioredoxin family.

Its function is as follows. Participates in various redox reactions through the reversible oxidation of its active center dithiol to a disulfide and catalyzes dithiol-disulfide exchange reactions. The protein is Probable thioredoxin-2 (trx-2) of Caenorhabditis elegans.